We begin with the raw amino-acid sequence, 379 residues long: Stimulator of interferon genes protein (379 aa).

Over Met-1–Gly-17 the chain is Cytoplasmic. A mediates interaction with ZDHHC1 and ZDHHC11 region spans residues Met-1 to Leu-190. Residues Ala-18–Trp-34 form a helical membrane-spanning segment. Residue Lys-20 forms a Glycyl lysine isopeptide (Lys-Gly) (interchain with G-Cter in ubiquitin) linkage. Over Gly-35–Leu-44 the chain is Lumenal. A helical transmembrane segment spans residues Arg-45–Glu-69. Residues Leu-70 to Cys-91 lie on the Cytoplasmic side of the membrane. 2 S-palmitoyl cysteine lipidation sites follow: Cys-88 and Cys-91. Residues Pro-92–Tyr-106 traverse the membrane as a helical segment. Residues Tyr-107–Pro-116 lie on the Lumenal side of the membrane. Residues Phe-117–Leu-134 form a helical membrane-spanning segment. Topologically, residues Gly-135–Ser-379 are cytoplasmic. A Glycyl lysine isopeptide (Lys-Gly) (interchain with G-Cter in ubiquitin) cross-link involves residue Lys-150. The segment at Phe-153–Glu-340 is cyclic dinucleotide-binding domain (CBD). 2',3'-cGAMP contacts are provided by Ser-162 and Tyr-167. Ser-162 and Tyr-167 together coordinate 3',3'-c-di-GMP. Tyr-167 lines the 2',3'-cUAMP pocket. Thr-229 is subject to Phosphothreonine. Residue Lys-236 forms a Glycyl lysine isopeptide (Lys-Gly) (interchain with G-Cter in ubiquitin) linkage. Arg-238 is a 2',3'-cGAMP binding site. Position 238 (Arg-238) interacts with 2',3'-cUAMP. 3',3'-c-di-GMP contacts are provided by residues Arg-238 to Ser-241 and Thr-263. The residue at position 241 (Ser-241) is a Phosphoserine. Thr-263 contributes to the 2',3'-cGAMP binding site. Thr-263 is a 2',3'-cUAMP binding site. Residue Lys-338 forms a Glycyl lysine isopeptide (Lys-Gly) (interchain with G-Cter in SUMO) linkage. The segment at Glu-340–Ser-379 is C-terminal tail (CTT). The interval Val-341 to Lys-370 is disordered. A compositionally biased stretch (polar residues) spans Ser-345–Gln-359. Residue Thr-354 is modified to Phosphothreonine. At Ser-355 the chain carries Phosphoserine; by MAP3K7. Thr-356 carries the post-translational modification Phosphothreonine. Ser-358 and Ser-366 each carry phosphoserine; by TBK1. Positions Leu-363–Ser-366 match the pLxIS motif motif.

This sequence belongs to the STING family. In terms of assembly, homodimer; forms a homodimer in absence of cyclic nucleotide (c-di-GMP or cGAMP); 'Lys-63'-linked ubiquitination at Lys-150 is required for homodimerization. Homotetramer; in presence of cyclic nucleotide (c-di-GMP or cGAMP), forms tetramers and higher-order oligomers through side-by-side packing. Interacts (when phosphorylated) with IRF3; following activation and phosphorylation on the pLxIS motif by TBK1, recruits IRF3. Interacts with RIGI, MAVS and SSR2. Interacts with RNF5 and TRIM56. Interacts with TBK1; when homodimer, leading to subsequent production of IFN-beta. Interacts with IFIT1 and IFIT2. Interacts with TRIM29; this interaction induces STING1 ubiquitination and subsequent degradation. Associates with the MHC-II complex. Interacts with STEEP1; interaction takes place upon cGAMP-activation and STING1 phosphorylation by MAP3K7/TAK1 and promotes STING1 translocation to COPII vesicles. Interacts with SEC24A, SEC24B, and SEC24C; promoting translocation to COPII vesicles. Interacts (when ubiquitinated) with SQSTM1; leading to relocalization to autophagosomes. Interacts with SURF4. Interacts with HNRNPA2B1. Interacts with ZDHHC1; ZDHHC1 constitutively interacts with STING1 and in presence of DNA viruses activates it by promoting its cGAMP-induced oligomerization and the recruitment of downstream signaling components. Interacts with ZDHHC11; in presence of DNA viruses promotes the recruitment of IRF3 to STING1. Interacts with TOMM70. Interacts with isoform IFI16-beta of IFI16. Interacts with TAB1; promoting recruitment of TAB1 to the endoplasmic reticulum membrane and subsequent activation of MAP3K7/TAK1. Interacts (via transmembrane domain) with TMEM203. Interacts with DDX41. Interacts with TMEM120A (via C-terminal domain); regulates the trafficking of STING1 from the ER to the ER-Golgi intermediate compartment to elicit antiviral effects. As to quaternary structure, (Microbial infection) Interacts with human papillomavirus (HPV) protein E7. (Microbial infection) Interacts with adenovirus early E1A protein. In terms of assembly, (Microbial infection) Interacts with herpes simplex virus 1 protein ICP34.5; this interaction inhibits the intracellular DNA sensing pathway. As to quaternary structure, (Microbial infection) Interacts with Chikungunya virus non-structural protein 1; this interaction results in inhibition of cGAS-STING signaling and increased levels of palmitoylated nsP1 and protein stabilization. (Microbial infection) Interacts with human cytomegalovirus proteins UL94, UL42 and UL138; these interactions result in the inhibition of cGAS-STING signaling. In terms of assembly, (Microbial infection) Interacts with varivella virus protein 39; this interaction results in the inhibition of cGAS-STING signaling. In terms of processing, phosphorylation by TBK1 leads to activation and production of IFN-beta. Following cyclic nucleotide (c-di-GMP or cGAMP)-binding, activation and translocation from the endoplasmic reticulum, STING1 is phosphorylated by TBK1 at Ser-366 in the pLxIS motif. The phosphorylated pLxIS motif constitutes an IRF3-binding motif, leading to recruitment of the transcription factor IRF3 to induce type-I interferons and other cytokines. The phosphorylated pLxIS motif facilitates SENP2 recruitment during late phase of viral infection. Phosphorylated on tyrosine residues upon MHC-II aggregation. Dephosphorylation by PPP6C leads to inactivation and decreased production of IFN-beta. Phosphorylation at Ser-358 is also required to activate IRF3. Phosphorylation at Ser-355 by MAP3K7/TAK1 facilitates its interaction with STEEP1, promoting STING1 translocation to COPII vesicles. Post-translationally, ubiquitinated. Ubiquitinated via 'Lys-63'-linked ubiquitin chains in response to double-stranded DNA treatment, leading to relocalization to autophagosomes and subsequent degradation; this process is dependent on SQSTM1. 'Lys-63'-linked ubiquitination mediated by TRIM56 at Lys-150 promotes homodimerization and recruitment of the antiviral kinase TBK1 and subsequent production of IFN-beta. 'Lys-48'-linked polyubiquitination at Lys-150 occurring after viral infection is mediated by RNF5 and leads to proteasomal degradation. 'Lys-11'-linked polyubiquitination at Lys-150 by RNF26 leads to stabilize STING1: it protects STING1 from RNF5-mediated 'Lys-48'-linked polyubiquitination. 'Lys-33'-linked and 'Lys-48'-linked deubiquitinated by USP20; leading to its stabilization and promotion of innate antiviral response. 'Lys-48'-linked deubiquitinated by USP44; leading to its stabilization and promotion of innate antiviral response. Deubiquitinated by USP13; leading to inhibition of innate antiviral response. 'Lys-63'-linked deubiquitinated by USP49; leading to inhibition of the subsequent recruitment of TBK1 to the signaling complex. 'Lys-63'-linked ubiquitination mediated by RNF39 promotes the activation of the cGAS-STING pathway. MARCHF5-mediated ubiquitination prevents the oxidation-induced polymer formation. (Microbial infection) Deubiquitinated by Epstein-Barr virus BPLF1 on both 'Lys-48' and 'Lys-63'-linked ubiquitin chains; leading to inhibition of cGAS-STING signaling. In terms of processing, sumoylated at Lys-338 by TRIM38 during the early phase of viral infection, promoting its stability by preventing its relocalization to autophagosomes and subsequent degradation. Desumoylated by SENP2 during the late phase of viral infection. Post-translationally, palmitoylation takes place in the Golgi apparatus and creates a platform for the recruitment of TBK1. Ubiquitously expressed. Expressed in skin endothelial cells, alveolar type 2 pneumocytes, bronchial epithelium and alveolar macrophages.

The protein resides in the endoplasmic reticulum membrane. Its subcellular location is the cytoplasm. It is found in the perinuclear region. The protein localises to the endoplasmic reticulum-Golgi intermediate compartment membrane. It localises to the golgi apparatus membrane. The protein resides in the cytoplasmic vesicle. Its subcellular location is the autophagosome membrane. It is found in the mitochondrion outer membrane. The protein localises to the cell membrane. The catalysed reaction is H(+)(in) = H(+)(out). With respect to regulation, activated upon binding to the hydrolysis-resistant 2'3'-cG(s)A(s)MP, an analog of cGAMP, in which phosphodiester linkages are replaced by phosphothioate linkages. Specifically inhibited by small-molecule H-151 (N-(4-ethylphenyl)-N'-1H-indol-3-yl-urea), which covalently binds Cys-91 and prevents palmitoylation and subsequent activation of STING1. In contrast to mouse protein, not activated by anticancer molecule 5,6-dimethylxanthenone 4-acetic acid (DMXAA). Inhibited by compound 18 ([(3S,4S)-2-(4-tert-butyl-3-chlorophenyl)-3-(2,3-dihydro-1,4-benzodioxin-6-yl)-7-fluoro-1-oxo-1,2,3,4-tetrahydroisoquinolin-4-yl]acetate), a competitive inhibitor with slow dissociation kinetics and good oral bioavailability. Homooligomerization and ability to promote the production of type I interferons is activated by C53, a small benzothiazinone-like compound that binds to the transmembrane regions. in the area of the putative pore. In contrast, compound C53, directly inhibits the proton channel activity and facilitate MAP1LC3B/LC3B lipidation and autophagosome formation. Facilitator of innate immune signaling that acts as a sensor of cytosolic DNA from bacteria and viruses and promotes the production of type I interferon (IFN-alpha and IFN-beta). Innate immune response is triggered in response to non-CpG double-stranded DNA from viruses and bacteria delivered to the cytoplasm. Acts by binding cyclic dinucleotides: recognizes and binds cyclic di-GMP (c-di-GMP), a second messenger produced by bacteria, cyclic UMP-AMP (2',3'-cUAMP), and cyclic GMP-AMP (cGAMP), a messenger produced by CGAS in response to DNA virus in the cytosol. Upon binding to c-di-GMP, cUAMP or cGAMP, STING1 oligomerizes, translocates from the endoplasmic reticulum and is phosphorylated by TBK1 on the pLxIS motif, leading to recruitment and subsequent activation of the transcription factor IRF3 to induce expression of type I interferon and exert a potent anti-viral state. Exhibits 2',3' phosphodiester linkage-specific ligand recognition: can bind both 2'-3' linked cGAMP (2'-3'-cGAMP) and 3'-3' linked cGAMP but is preferentially activated by 2'-3' linked cGAMP. The preference for 2'-3'-cGAMP, compared to other linkage isomers is probably due to the ligand itself, whichs adopts an organized free-ligand conformation that resembles the STING1-bound conformation and pays low energy costs in changing into the active conformation. In addition to promote the production of type I interferons, plays a direct role in autophagy. Following cGAMP-binding, STING1 buds from the endoplasmic reticulum into COPII vesicles, which then form the endoplasmic reticulum-Golgi intermediate compartment (ERGIC). The ERGIC serves as the membrane source for WIPI2 recruitment and LC3 lipidation, leading to formation of autophagosomes that target cytosolic DNA or DNA viruses for degradation by the lysosome. Promotes autophagy by acting as a proton channel that directs proton efflux from the Golgi to facilitate MAP1LC3B/LC3B lipidation. The autophagy- and interferon-inducing activities can be uncoupled and autophagy induction is independent of TBK1 phosphorylation. Autophagy is also triggered upon infection by bacteria: following c-di-GMP-binding, which is produced by live Gram-positive bacteria, promotes reticulophagy. May be involved in translocon function, the translocon possibly being able to influence the induction of type I interferons. May be involved in transduction of apoptotic signals via its association with the major histocompatibility complex class II (MHC-II). In terms of biological role, (Microbial infection) Antiviral activity is antagonized by oncoproteins, such as papillomavirus (HPV) protein E7 and adenovirus early E1A protein. Such oncoproteins prevent the ability to sense cytosolic DNA. The polypeptide is Stimulator of interferon genes protein (Homo sapiens (Human)).